Reading from the N-terminus, the 135-residue chain is uncharacterized protein (135 aa).

This is an uncharacterized protein from Saccharomyces cerevisiae (strain ATCC 204508 / S288c) (Baker's yeast).